We begin with the raw amino-acid sequence, 176 residues long: MGYYDDDAHGHVEADAAPRATTGTGTGSASQTVTIPCHHIRLGDILILQGRPCQVIRISTSAATGQHRYLGVDLFTKQLHEESSFVSNPAPSVVVQTMLGPVFKQYRVLDMQDGSIVAMTETGDVKQNLPVIDQSSLWNRLQKAFESGRGSVRVLVVSDHGREMAVDMKVVHGSRL.

A propeptide spanning residues 1 to 16 is cleaved from the precursor; sequence MGYYDDDAHGHVEADA. A compositionally biased stretch (basic and acidic residues) spans 1–16; sequence MGYYDDDAHGHVEADA. The tract at residues 1–31 is disordered; that stretch reads MGYYDDDAHGHVEADAAPRATTGTGTGSASQ. The Microbody targeting signal signature appears at 174–176; the sequence is SRL.

Belongs to the eIF-5A family. Hex1 subfamily. In terms of assembly, forms oligomers. Self-assembles into hexagonal rods.

The protein localises to the cell septum. Functionally, major component of Woronin bodies, fungal-specific organelles that occlude septal pores in order to separate intact from damaged compartments. Hex-1 binds directly or indirectly to the Woronin body tether that in turn is anchored at the rim of the septal pore. This is Woronin body major protein from Neurospora crassa (strain ATCC 24698 / 74-OR23-1A / CBS 708.71 / DSM 1257 / FGSC 987).